A 463-amino-acid chain; its full sequence is tRNA modification GTPase MnmE (463 aa).

(6S)-5-formyl-5,6,7,8-tetrahydrofolate is bound by residues arginine 29, glutamate 91, and arginine 130. Positions 225-384 (GLKVAIVGRP…LETAILEIVQ (160 aa)) constitute a TrmE-type G domain. Asparagine 235 contacts K(+). GTP-binding positions include 235-240 (NVGKSS), 254-260 (TDLPGTT), and 279-282 (DTAG). Serine 239 lines the Mg(2+) pocket. Residues threonine 254, leucine 256, and threonine 259 each contribute to the K(+) site. Threonine 260 is a Mg(2+) binding site. Lysine 463 is a (6S)-5-formyl-5,6,7,8-tetrahydrofolate binding site.

The protein belongs to the TRAFAC class TrmE-Era-EngA-EngB-Septin-like GTPase superfamily. TrmE GTPase family. As to quaternary structure, homodimer. Heterotetramer of two MnmE and two MnmG subunits. K(+) is required as a cofactor.

It is found in the cytoplasm. Functionally, exhibits a very high intrinsic GTPase hydrolysis rate. Involved in the addition of a carboxymethylaminomethyl (cmnm) group at the wobble position (U34) of certain tRNAs, forming tRNA-cmnm(5)s(2)U34. The polypeptide is tRNA modification GTPase MnmE (Trichormus variabilis (strain ATCC 29413 / PCC 7937) (Anabaena variabilis)).